We begin with the raw amino-acid sequence, 335 residues long: Galactosylgalactosylxylosylprotein 3-beta-glucuronosyltransferase 3 (335 aa).

Over 1–7 (MKLKLKN) the chain is Cytoplasmic. A helical; Signal-anchor for type II membrane protein membrane pass occupies residues 8 to 28 (VFLAYFLVSIAGLLYALVQLG). At 29-335 (QPCDCLPPLR…GQGSDPAIEV (307 aa)) the chain is on the lumenal side. Residues 82–84 (PTY), Asp113, Arg156, Arg161, and 194–196 (DDD) each bind UDP-alpha-D-glucuronate. Asp196 contributes to the Mn(2+) binding site. Positions 243-252 (WEPNRPFPLD) are interaction with galactose moiety of substrate glycoprotein. Residue Glu281 is the Proton donor/acceptor of the active site. A glycan (N-linked (GlcNAc...) asparagine) is linked at Asn300. 308–310 (HTR) provides a ligand contact to UDP-alpha-D-glucuronate. The segment covering 312–322 (EKPKMKQEEQL) has biased composition (basic and acidic residues). A disordered region spans residues 312-335 (EKPKMKQEEQLQRQGQGSDPAIEV).

This sequence belongs to the glycosyltransferase 43 family. Homodimer; disulfide-linked. Interacts with PXYLP1; the interaction increases the 2-phosphoxylose phosphatase activity of PXYLP1 during completion of linkage region formation in a B3GAT3-mediated manner. Mn(2+) is required as a cofactor. In terms of processing, N-glycosylated. In terms of tissue distribution, expressed in heart, aorta, bone, and also in osteoblasts.

It is found in the golgi apparatus membrane. It localises to the golgi apparatus. Its subcellular location is the cis-Golgi network. The enzyme catalyses 3-O-(beta-D-galactosyl-(1-&gt;3)-beta-D-galactosyl-(1-&gt;4)-beta-D-xylosyl)-L-seryl-[protein] + UDP-alpha-D-glucuronate = 3-O-(beta-D-GlcA-(1-&gt;3)-beta-D-Gal-(1-&gt;3)-beta-D-Gal-(1-&gt;4)-beta-D-Xyl)-L-seryl-[protein] + UDP + H(+). It participates in protein modification; protein glycosylation. Glycosaminoglycans biosynthesis. Involved in forming the linkage tetrasaccharide present in heparan sulfate and chondroitin sulfate. Transfers a glucuronic acid moiety from the uridine diphosphate-glucuronic acid (UDP-GlcUA) to the common linkage region trisaccharide Gal-beta-1,3-Gal-beta-1,4-Xyl covalently bound to a Ser residue at the glycosaminylglycan attachment site of proteoglycans. Can also play a role in the biosynthesis of l2/HNK-1 carbohydrate epitope on glycoproteins. Stimulates 2-phosphoxylose phosphatase activity of PXYLP1 in presence of uridine diphosphate-glucuronic acid (UDP-GlcUA) during completion of linkage region formation. The polypeptide is Galactosylgalactosylxylosylprotein 3-beta-glucuronosyltransferase 3 (B3gat3) (Mus musculus (Mouse)).